A 412-amino-acid polypeptide reads, in one-letter code: Isocitrate dehydrogenase [NADP] cytoplasmic (412 aa).

Residues 75–77 and arginine 82 each bind NADP(+); that span reads TIT. Threonine 77 contributes to the substrate binding site. Substrate-binding positions include 94–100, arginine 109, and arginine 132; that span reads SPNGTIR. Mn(2+) is bound at residue aspartate 252. Lysine 260 provides a ligand contact to NADP(+). Aspartate 275 contacts Mn(2+). NADP(+)-binding positions include 310–315 and asparagine 328; that span reads GTVTRH.

This sequence belongs to the isocitrate and isopropylmalate dehydrogenases family. In terms of assembly, homodimer. Mg(2+) serves as cofactor. Requires Mn(2+) as cofactor. Post-translationally, the N-terminus is blocked.

The protein resides in the cytoplasm. The enzyme catalyses D-threo-isocitrate + NADP(+) = 2-oxoglutarate + CO2 + NADPH. With respect to regulation, by catabolite repression. In terms of biological role, may function in the production of NADPH for fatty acid and sterol synthesis. This chain is Isocitrate dehydrogenase [NADP] cytoplasmic (IDP2), found in Saccharomyces cerevisiae (strain ATCC 204508 / S288c) (Baker's yeast).